A 291-amino-acid polypeptide reads, in one-letter code: Lipoyl synthase 1 (291 aa).

[4Fe-4S] cluster-binding residues include Cys34, Cys39, Cys45, Cys60, Cys64, Cys67, and Ser274. Positions 46–263 (FQAGTATFLI…QVYGEELGFL (218 aa)) constitute a Radical SAM core domain.

It belongs to the radical SAM superfamily. Lipoyl synthase family. Requires [4Fe-4S] cluster as cofactor.

The protein localises to the cytoplasm. It carries out the reaction [[Fe-S] cluster scaffold protein carrying a second [4Fe-4S](2+) cluster] + N(6)-octanoyl-L-lysyl-[protein] + 2 oxidized [2Fe-2S]-[ferredoxin] + 2 S-adenosyl-L-methionine + 4 H(+) = [[Fe-S] cluster scaffold protein] + N(6)-[(R)-dihydrolipoyl]-L-lysyl-[protein] + 4 Fe(3+) + 2 hydrogen sulfide + 2 5'-deoxyadenosine + 2 L-methionine + 2 reduced [2Fe-2S]-[ferredoxin]. It participates in protein modification; protein lipoylation via endogenous pathway; protein N(6)-(lipoyl)lysine from octanoyl-[acyl-carrier-protein]: step 2/2. In terms of biological role, catalyzes the radical-mediated insertion of two sulfur atoms into the C-6 and C-8 positions of the octanoyl moiety bound to the lipoyl domains of lipoate-dependent enzymes, thereby converting the octanoylated domains into lipoylated derivatives. The protein is Lipoyl synthase 1 of Nostoc sp. (strain PCC 7120 / SAG 25.82 / UTEX 2576).